The chain runs to 248 residues: Isoprenyl transferase (248 aa).

Residue Asp23 is part of the active site. Asp23 lines the Mg(2+) pocket. Substrate contacts are provided by residues 24–27, Trp28, Arg36, His40, and 68–70; these read GNGR and STE. Asn71 (proton acceptor) is an active-site residue. Residues Trp72, Arg74, Arg185, and 191–193 contribute to the substrate site; that span reads RIS. Glu204 contributes to the Mg(2+) binding site.

The protein belongs to the UPP synthase family. As to quaternary structure, homodimer. It depends on Mg(2+) as a cofactor.

Functionally, catalyzes the condensation of isopentenyl diphosphate (IPP) with allylic pyrophosphates generating different type of terpenoids. The protein is Isoprenyl transferase of Neisseria gonorrhoeae (strain ATCC 700825 / FA 1090).